A 192-amino-acid chain; its full sequence is MEYRSLTLDDFLSRFQLLRPQINRETLNHRQAAVLIPIVRRPQPGLLLTQRSIHLRKHAGQVAFPGGAVDDTDTSVIAAALREAEEEVAIPPSAVEVIGVLPPVDSVTGYQVTPVVGIIPPDLPYRASEDEVSAVFEMPLAQALHLGRYHPLDIYRRGDSHRVWLSWYEQYFVWGMTAGIIRELALQIGVKP.

A Nudix hydrolase domain is found at 29 to 160 (HRQAAVLIPI…PLDIYRRGDS (132 aa)). Residues 67–89 (GAVDDTDTSVIAAALREAEEEVA) carry the Nudix box motif. Mg(2+) contacts are provided by Glu83 and Glu87.

The protein belongs to the Nudix hydrolase family. PCD1 subfamily. Requires Mn(2+) as cofactor. It depends on Mg(2+) as a cofactor.

Its function is as follows. Probably mediates the hydrolysis of some nucleoside diphosphate derivatives. This is an uncharacterized protein from Escherichia coli O6:H1 (strain CFT073 / ATCC 700928 / UPEC).